The sequence spans 512 residues: MSQTEEKKGIGRRVQAFGSFLSSMIMPNIGAFIAWGFIAAIFIDNGWLPNKDLATLAGPMITYLIPLLIAFSGGRLIYDLRGGIIAATATMGVIVALPDTPMLLGAMIMGPLVGWLMKKTDQLIQPRTPQGFEMLFNNFSAGILGFIMTIAGFKILAPLMKFIMHILSVAVEALVHAHLLPLVSILVEPAKIVFLNNAINHGVFTPLGADQAAKAGQSILYTIESNPGPGLGILLAYMIFGKGTAKATSYGAGIIHFLGGIHEIYFPYVLMRPLLFIAVILGGMTGVATYQATGFGFKSPASPGSFIVYCLNAPRGEFLHMLLGVFLAALVSFVVAALIMKFTREPKQDLEAATAQMENTKGKKSSVASKLVSSDKNVNTEENASGNVSETSSSDDDPEALLDNYNTEDVDAHNYNNINHVIFACDAGMGSSAMGASMLRNKFKKAGINDITVTNTAINQLPKDAQLVITQKKLTDRAIKQTPNAIHISVDNFLNSPRYEELLNNLKKDDQA.

Residues 1–28 lie on the Cytoplasmic side of the membrane; the sequence is MSQTEEKKGIGRRVQAFGSFLSSMIMPN. The region spanning 17–349 is the PTS EIIC type-2 domain; that stretch reads FGSFLSSMIM…MKFTREPKQD (333 aa). A helical membrane pass occupies residues 29-50; the sequence is IGAFIAWGFIAAIFIDNGWLPN. Topologically, residues 51–54 are extracellular; it reads KDLA. Residues 55–75 traverse the membrane as a helical segment; that stretch reads TLAGPMITYLIPLLIAFSGGR. Topologically, residues 76–139 are cytoplasmic; sequence LIYDLRGGII…QGFEMLFNNF (64 aa). A helical membrane pass occupies residues 140 to 161; it reads SAGILGFIMTIAGFKILAPLMK. At 162 to 170 the chain is on the extracellular side; it reads FIMHILSVA. Residues 171–191 form a helical membrane-spanning segment; sequence VEALVHAHLLPLVSILVEPAK. Topologically, residues 192–278 are cytoplasmic; it reads IVFLNNAINH…VLMRPLLFIA (87 aa). A helical membrane pass occupies residues 279–298; the sequence is VILGGMTGVATYQATGFGFK. The Extracellular portion of the chain corresponds to 299-318; the sequence is SPASPGSFIVYCLNAPRGEF. The chain crosses the membrane as a helical span at residues 319-340; it reads LHMLLGVFLAALVSFVVAALIM. Over 341-512 the chain is Cytoplasmic; that stretch reads KFTREPKQDL…LNNLKKDDQA (172 aa). A disordered region spans residues 355–402; that stretch reads AQMENTKGKKSSVASKLVSSDKNVNTEENASGNVSETSSSDDDPEALL. The span at 365–376 shows a compositional bias: low complexity; the sequence is SSVASKLVSSDK. Residues 380–392 are compositionally biased toward polar residues; the sequence is TEENASGNVSETS. Positions 419-512 constitute a PTS EIIB type-2 domain; sequence NHVIFACDAG…LNNLKKDDQA (94 aa). Catalysis depends on Cys-425, which acts as the Phosphocysteine intermediate; for EIIB activity. Cys-425 carries the post-translational modification Phosphocysteine; by EIIA.

As to quaternary structure, homodimer.

It is found in the cell membrane. It catalyses the reaction D-mannitol(out) + N(pros)-phospho-L-histidyl-[protein] = D-mannitol 1-phosphate(in) + L-histidyl-[protein]. In terms of biological role, the phosphoenolpyruvate-dependent sugar phosphotransferase system (sugar PTS), a major carbohydrate active transport system, catalyzes the phosphorylation of incoming sugar substrates concomitantly with their translocation across the cell membrane. The enzyme II CmtAB PTS system is involved in D-mannitol transport. The chain is PTS system mannitol-specific EIICB component (mtlA) from Staphylococcus aureus (strain Mu50 / ATCC 700699).